The following is a 554-amino-acid chain: (+)-delta-cadinene synthase isozyme XC14 (554 aa).

Over residues 1-16 the composition is skewed to low complexity; it reads MASQVSQMPSSSPLSS. A disordered region spans residues 1–23; sequence MASQVSQMPSSSPLSSNKDEMRP. Positions 307, 311, and 451 each coordinate Mg(2+). The short motif at 307–311 is the DDXXD motif element; the sequence is DDTYD.

This sequence belongs to the terpene synthase family. Mg(2+) serves as cofactor.

It catalyses the reaction (2E,6E)-farnesyl diphosphate = (1S,8aR)-delta-cadinene + diphosphate. It participates in secondary metabolite biosynthesis; terpenoid biosynthesis. Its function is as follows. Responsible for the cyclization of trans,trans-farnesyl diphosphate (FPP) to (+)-delta cadinene. The sequence is that of (+)-delta-cadinene synthase isozyme XC14 from Gossypium arboreum (Tree cotton).